A 265-amino-acid polypeptide reads, in one-letter code: MIKWPWKVQESAHQTALPWQEALSIPLLTCLTEQEQSKLVALAERFLQQKRLVPLQGFELNSLRSCRIALLFCLPVLELGLEWLDGFHEVLIYPAPFVVDDEWEDDIGLVHNQRIVQSGQSWQQGPIVLNWLDIQDSFDASGFNLIIHEVAHKLDTRNGDRASGVPFISLREVAGWEHDLHAAMNNIQEEIELVGENAASIDAYAASDPAECFAVLSEYFFSAPELFAPRFPSLWQRFCQFYQQDPLQRLHHANDTDSFSATNVH.

4 residues coordinate Zn(2+): His-111, His-148, His-152, and Glu-211.

It belongs to the MtfA family. Interacts with Mlc. Zn(2+) serves as cofactor.

It localises to the cytoplasm. Its function is as follows. Involved in the modulation of the activity of the glucose-phosphotransferase system (glucose-PTS). Interacts with the transcriptional repressor Mlc, preventing its interaction with DNA and leading to the modulation of expression of genes regulated by Mlc, including ptsG, which encodes the PTS system glucose-specific EIICB component. Functionally, shows zinc-dependent metallopeptidase activity. The chain is Mlc titration factor A from Escherichia coli O6:K15:H31 (strain 536 / UPEC).